Reading from the N-terminus, the 209-residue chain is MALTQMALDSLDFDATVALAEKVAPHVDILEIGTPCIKHNGIKLLETLRAKFPNNKILVDLKTMDAGFYEAEPFYKAGADITTVLGVADLGTIKGVIDAANKYGKKAQIDLINVGDKAARTKEVAKLGAHIIGVHTGLDQQAAGQTPFADLATVTGLNLGLEVSVAGGVKPATVAQVKDAGATIIVAGAAIYGAADPAAAAAEITGLAK.

Belongs to the HPS/KGPDC family. HPS subfamily. In terms of assembly, homodimer.

It catalyses the reaction D-ribulose 5-phosphate + formaldehyde = D-arabino-hex-3-ulose 6-phosphate. It participates in one-carbon metabolism; formaldehyde assimilation via RuMP pathway; D-fructose 6-phosphate from D-ribulose 5-phosphate and formaldehyde: step 1/2. In terms of biological role, catalyzes the condensation of ribulose 5-phosphate with formaldehyde to form 3-hexulose 6-phosphate. The chain is 3-hexulose-6-phosphate synthase (rmpA) from Methylomonas aminofaciens.